The chain runs to 166 residues: Small ribosomal subunit protein uS5 (166 aa).

One can recognise an S5 DRBM domain in the interval 11 to 74 (LQEKLIAVNR…EKARRNMINV (64 aa)).

It belongs to the universal ribosomal protein uS5 family. In terms of assembly, part of the 30S ribosomal subunit. Contacts proteins S4 and S8.

In terms of biological role, with S4 and S12 plays an important role in translational accuracy. Located at the back of the 30S subunit body where it stabilizes the conformation of the head with respect to the body. The protein is Small ribosomal subunit protein uS5 of Actinobacillus succinogenes (strain ATCC 55618 / DSM 22257 / CCUG 43843 / 130Z).